We begin with the raw amino-acid sequence, 201 residues long: Ubiquinone biosynthesis accessory factor UbiJ (201 aa).

The region spanning 15–112 (LNTFLYRSPA…QVVQNFVALA (98 aa)) is the SCP2 domain.

This sequence belongs to the UbiJ family.

The protein resides in the cytoplasm. The protein operates within cofactor biosynthesis; ubiquinone biosynthesis. Required for ubiquinone (coenzyme Q) biosynthesis under aerobic conditions. Binds hydrophobic ubiquinone biosynthetic intermediates via its SCP2 domain and is essential for the stability of the Ubi complex. May constitute a docking platform where Ubi enzymes assemble and access their SCP2-bound polyprenyl substrates. Required for intracellular proliferation in macrophages. This chain is Ubiquinone biosynthesis accessory factor UbiJ, found in Salmonella typhimurium (strain LT2 / SGSC1412 / ATCC 700720).